Reading from the N-terminus, the 201-residue chain is Casparian strip membrane protein 2 (201 aa).

Topologically, residues 1–38 (MKSTGEATAINIGETKSASATTVATTKAIQHPKAGLKR) are cytoplasmic. A helical membrane pass occupies residues 39–59 (GLAIFDFILRLSAIGAALAAT). The Extracellular segment spans residues 60 to 89 (TTMGTTDQTLPFFTQFFQFQASYDDLPAFS). Residues 90-110 (FFVIANAIASGYLFLSLPFSI) traverse the membrane as a helical segment. Topologically, residues 111 to 129 (VCIVRPHAMGARLLLVICD) are cytoplasmic. Residues 130 to 150 (TVMVALTIAAAAAAAAIVYLA) form a helical membrane-spanning segment. The Extracellular portion of the chain corresponds to 151 to 175 (HNGNSNANWVAICQQFDDFCQSVSG). A helical transmembrane segment spans residues 176–196 (AVVASFIAAVLFMLMIVLSAF). Residues 197–201 (SLRKH) are Cytoplasmic-facing.

The protein belongs to the Casparian strip membrane proteins (CASP) family. In terms of assembly, homodimer and heterodimers.

The protein resides in the cell membrane. Functionally, regulates membrane-cell wall junctions and localized cell wall deposition. Required for establishment of the Casparian strip membrane domain (CSD) and the subsequent formation of Casparian strips, a cell wall modification of the root endodermis that determines an apoplastic barrier between the intraorganismal apoplasm and the extraorganismal apoplasm and prevents lateral diffusion. The chain is Casparian strip membrane protein 2 from Vitis vinifera (Grape).